The following is a 383-amino-acid chain: MLVSPTAAATSIEQQTIRDLRSIVPQIDNLNDGYVLRWLRAKEGRFDETAESLKKHVTFRNAWHLDKIEQWTPPECLEKYCGYGLLGDTEGRPILMSLLGNVDVEGLLRSVASLDYIKFSLAAIEKGMKLCEEKAKESGRPFEQMTLVFDLENITSAHFSCKQFASSFTTLVSLFQDHYPLFLRKILIIRAPEMARIAYASITAILQDPITRLVEMPSESDWKWSLAQIVNLDAWPMYWGGNLVENGDPKCPSRIKYGGGAVDESYFVDPKKAMADYDQLTTVYAGDKHLIQIKVKRPSRISWTYMTDEDDIGFEIHYDKTGSCDKLTEMETVYPYIRLECTNVPITGHLDVTDVGNYVLEFDNYYSWFSAKQLRYNIEIEDL.

Residues 73–247 (PPECLEKYCG…YWGGNLVENG (175 aa)) form the CRAL-TRIO domain. Positions 271–380 (KKAMADYDQL…AKQLRYNIEI (110 aa)) constitute a GOLD domain.

Highly expressed in cells of the pi uterine cell lineage.

It localises to the cytoplasm. It is found in the cytosol. Functionally, vesicle trafficking protein. Functions in uterine cells to promote basement membrane (BM) mobility and BM gap formation during tissue remodeling. This is Protein ctg-1 from Caenorhabditis elegans.